We begin with the raw amino-acid sequence, 105 residues long: Met repressor (105 aa).

This sequence belongs to the MetJ family. Homodimer.

The protein localises to the cytoplasm. This regulatory protein, when combined with SAM (S-adenosylmethionine) represses the expression of the methionine regulon and of enzymes involved in SAM synthesis. The protein is Met repressor of Shigella boydii serotype 18 (strain CDC 3083-94 / BS512).